The primary structure comprises 330 residues: 4-hydroxythreonine-4-phosphate dehydrogenase (330 aa).

Substrate is bound by residues histidine 133 and threonine 134. A divalent metal cation-binding residues include histidine 163, histidine 208, and histidine 263. Positions 271, 280, and 289 each coordinate substrate.

Belongs to the PdxA family. In terms of assembly, homodimer. Requires Zn(2+) as cofactor. Mg(2+) is required as a cofactor. Co(2+) serves as cofactor.

The protein resides in the cytoplasm. The enzyme catalyses 4-(phosphooxy)-L-threonine + NAD(+) = 3-amino-2-oxopropyl phosphate + CO2 + NADH. It participates in cofactor biosynthesis; pyridoxine 5'-phosphate biosynthesis; pyridoxine 5'-phosphate from D-erythrose 4-phosphate: step 4/5. Functionally, catalyzes the NAD(P)-dependent oxidation of 4-(phosphooxy)-L-threonine (HTP) into 2-amino-3-oxo-4-(phosphooxy)butyric acid which spontaneously decarboxylates to form 3-amino-2-oxopropyl phosphate (AHAP). The polypeptide is 4-hydroxythreonine-4-phosphate dehydrogenase (Azoarcus sp. (strain BH72)).